The chain runs to 296 residues: Homoserine kinase (296 aa).

85–95 (PLSRGLGSSAA) is an ATP binding site.

The protein belongs to the GHMP kinase family. Homoserine kinase subfamily.

The protein resides in the cytoplasm. The catalysed reaction is L-homoserine + ATP = O-phospho-L-homoserine + ADP + H(+). The protein operates within amino-acid biosynthesis; L-threonine biosynthesis; L-threonine from L-aspartate: step 4/5. In terms of biological role, catalyzes the ATP-dependent phosphorylation of L-homoserine to L-homoserine phosphate. The sequence is that of Homoserine kinase from Clostridium acetobutylicum (strain ATCC 824 / DSM 792 / JCM 1419 / IAM 19013 / LMG 5710 / NBRC 13948 / NRRL B-527 / VKM B-1787 / 2291 / W).